Here is a 173-residue protein sequence, read N- to C-terminus: Enhancer of split mdelta protein (173 aa).

The bHLH domain occupies 15–72 (YRKVTKPLLERKRRARMNLYLDELKDLIVDTMDAQGEQVSKLEKADILELTVNYLKAQ). Positions 93–126 (FRAGYTQAAYEVSHIFSTVPGLDLKFGTHLMKQL) constitute an Orange domain. Residues 147–173 (VNLADQKRSKSPREEDIHHGEEVWRPW) are disordered. The span at 151–173 (DQKRSKSPREEDIHHGEEVWRPW) shows a compositional bias: basic and acidic residues. A WRPW motif motif is present at residues 170–173 (WRPW).

In terms of assembly, transcription repression requires formation of a complex with a corepressor protein (Groucho).

The protein resides in the nucleus. Its function is as follows. Transcriptional repressor of genes that require a bHLH protein for their transcription. May serve as a transcriptional regulator of the Achaete-scute complex (AS-C) genes. Contributes to the neural-epidermal lineage decision during early neurogenesis. As part of the Notch signaling pathway, required to maintain the self-renewal and identity of type II neuroblasts by regulating the expression of the transcriptional repressor erm. The chain is Enhancer of split mdelta protein from Drosophila melanogaster (Fruit fly).